The sequence spans 131 residues: D-ribose pyranase (131 aa).

Residue His-20 is the Proton donor of the active site. Substrate is bound by residues Asp-28, His-98, and 120-122; that span reads YAN.

Belongs to the RbsD / FucU family. RbsD subfamily. As to quaternary structure, homodecamer.

It is found in the cytoplasm. The catalysed reaction is beta-D-ribopyranose = beta-D-ribofuranose. Its pathway is carbohydrate metabolism; D-ribose degradation; D-ribose 5-phosphate from beta-D-ribopyranose: step 1/2. Functionally, catalyzes the interconversion of beta-pyran and beta-furan forms of D-ribose. The chain is D-ribose pyranase from Laribacter hongkongensis (strain HLHK9).